We begin with the raw amino-acid sequence, 400 residues long: Subtilisin-like protease 7 (400 aa).

The first 20 residues, 1-20 (MGFITKAIPLALAAASVING), serve as a signal peptide directing secretion. A propeptide spanning residues 21–119 (AEIMETRAGV…IERDARVQIN (99 aa)) is cleaved from the precursor. Residues 36-118 (KYIVVMNDGM…YIERDARVQI (83 aa)) form the Inhibitor I9 domain. N-linked (GlcNAc...) asparagine glycosylation occurs at Asn58. Residues 129–400 (SWGLARVGSK…SKLINNGSGM (272 aa)) form the Peptidase S8 domain. Residues Asp161 and His192 each act as charge relay system in the active site. 2 N-linked (GlcNAc...) asparagine glycosylation sites follow: Asn222 and Asn252. Ser346 serves as the catalytic Charge relay system. N-linked (GlcNAc...) asparagine glycosylation is present at Asn396.

This sequence belongs to the peptidase S8 family.

It localises to the secreted. Its function is as follows. Secreted subtilisin-like serine protease with keratinolytic activity that contributes to pathogenicity. This chain is Subtilisin-like protease 7 (SUB7), found in Trichophyton verrucosum (Cattle ringworm fungus).